The following is a 699-amino-acid chain: Elongation factor G (699 aa).

The tr-type G domain occupies 8–283 (EHIRNIGICA…AVVDFLPSPI (276 aa)). Residues 17 to 24 (AHIDAGKT), 81 to 85 (DTPGH), and 135 to 138 (NKMD) each bind GTP.

The protein belongs to the TRAFAC class translation factor GTPase superfamily. Classic translation factor GTPase family. EF-G/EF-2 subfamily.

It is found in the cytoplasm. Functionally, catalyzes the GTP-dependent ribosomal translocation step during translation elongation. During this step, the ribosome changes from the pre-translocational (PRE) to the post-translocational (POST) state as the newly formed A-site-bound peptidyl-tRNA and P-site-bound deacylated tRNA move to the P and E sites, respectively. Catalyzes the coordinated movement of the two tRNA molecules, the mRNA and conformational changes in the ribosome. In Rickettsia helvetica, this protein is Elongation factor G.